A 358-amino-acid chain; its full sequence is MNSLKSLCLKCIVTLCLLVNAFAFDYASLQEQDENLLAACPQYITIYTNGPVPGTTTIYPTSNVASNTSENYPYTGSKSLSSSSILSNSTISTSSSTPITASVPTSSSILSNSTIPTTSPVPTTSSTPTSSSILSNSTIPSSSSISASTITTTIISGSTQFTTTFVDQSIDTVEVVIPTAGYITTTLTSGSSYPVSTTTLQTVSGTQSGLVEVITPSCGCNPENSFHLRLVGDSINPSYVYKNTNVSDPDEGNMYTSTEGNTEAVNVFYYDPTVERILTCDCVRPVYTIYTDDPDSSFDIIKNNNGTFTFVESSSGEIQTLHVSQYGALWITSPEYDGETGGMDDVGFRADDVILVAY.

The first 23 residues, Met1–Ala23, serve as a signal peptide directing secretion. Residues Asn67, Asn88, Asn112, and Asn136 are each glycosylated (N-linked (GlcNAc...) asparagine). Residues Thr90–Ser144 form a disordered region. 2 repeat units span residues Ser148–Ala180 and Gly181–Cys218. The segment at Ser148 to Cys218 is 2 X 36 AA approximate tandem repeats. In terms of domain architecture, DIPSY spans Gln207–Tyr358. 2 N-linked (GlcNAc...) asparagine glycosylation sites follow: Asn245 and Asn305.

The protein belongs to the mam3/map4 family.

Its subcellular location is the cell surface. In terms of biological role, may be involved in agglutination during conjugation or other aspects of colony formation. Induces flocculation when overexpressed. In Schizosaccharomyces pombe (strain 972 / ATCC 24843) (Fission yeast), this protein is Putative cell-type specific agglutination protein pfl7.